A 201-amino-acid polypeptide reads, in one-letter code: Homeobox protein goosecoid-2 (201 aa).

Disordered stretches follow at residues 1-55 (MATA…PEAP), 95-124 (PATP…RRTR), and 179-201 (RHQK…KESC). Residues 95–106 (PATPSPLTAPRA) show a composition bias toward low complexity. The segment at residues 123-182 (TRRHRTIFSEEQLQALEALFVQNQYPDVGTRERLAVRIRLREERVEVWFKNRRAKWRHQK) is a DNA-binding region (homeobox).

The protein belongs to the paired homeobox family. Bicoid subfamily. Expressed in adult testis.

It localises to the nucleus. Functionally, may have a role in development. May regulate its own transcription. May bind the bicoid consensus sequence TAATCC. This is Homeobox protein goosecoid-2 (Gsc2) from Mus musculus (Mouse).